Here is a 341-residue protein sequence, read N- to C-terminus: S-adenosylmethionine:tRNA ribosyltransferase-isomerase (341 aa).

This sequence belongs to the QueA family. Monomer.

The protein resides in the cytoplasm. It catalyses the reaction 7-aminomethyl-7-carbaguanosine(34) in tRNA + S-adenosyl-L-methionine = epoxyqueuosine(34) in tRNA + adenine + L-methionine + 2 H(+). The protein operates within tRNA modification; tRNA-queuosine biosynthesis. Functionally, transfers and isomerizes the ribose moiety from AdoMet to the 7-aminomethyl group of 7-deazaguanine (preQ1-tRNA) to give epoxyqueuosine (oQ-tRNA). In Thermoanaerobacter sp. (strain X514), this protein is S-adenosylmethionine:tRNA ribosyltransferase-isomerase.